Reading from the N-terminus, the 125-residue chain is uncharacterized protein (125 aa).

This is an uncharacterized protein from Acanthamoeba polyphaga (Amoeba).